A 523-amino-acid chain; its full sequence is Putative oxidoreductase TDA3 (523 aa).

Residues 157–172 (NSSLSSSGSSLKNDSA) are compositionally biased toward low complexity. The disordered stretch occupies residues 157–189 (NSSLSSSGSSLKNDSASNEEEGSDIHVSSSVPS). Phosphoserine is present on residues Ser-189, Ser-204, and Ser-306.

It belongs to the TDA3 family. As to quaternary structure, interacts with BTN2.

Its subcellular location is the cytoplasm. The protein localises to the late endosome. In terms of biological role, putative oxidoreductase that negatively regulates the retrieval of cargo from late endosomes to the Golgi. Regulates YIF1 and KEX2 localization. Required for fast DNA replication. The chain is Putative oxidoreductase TDA3 (TDA3) from Saccharomyces cerevisiae (strain ATCC 204508 / S288c) (Baker's yeast).